We begin with the raw amino-acid sequence, 280 residues long: Shikimate dehydrogenase (NADP(+)) (280 aa).

Residues 18–20 and threonine 65 contribute to the shikimate site; that span reads SRS. Residue lysine 69 is the Proton acceptor of the active site. Shikimate-binding residues include asparagine 90 and aspartate 105. Residues 131-135, 154-159, and isoleucine 219 contribute to the NADP(+) site; these read GAGGA and NRTRAR. Tyrosine 221 provides a ligand contact to shikimate. Residue glycine 242 participates in NADP(+) binding.

The protein belongs to the shikimate dehydrogenase family. In terms of assembly, homodimer.

It carries out the reaction shikimate + NADP(+) = 3-dehydroshikimate + NADPH + H(+). The protein operates within metabolic intermediate biosynthesis; chorismate biosynthesis; chorismate from D-erythrose 4-phosphate and phosphoenolpyruvate: step 4/7. Its function is as follows. Involved in the biosynthesis of the chorismate, which leads to the biosynthesis of aromatic amino acids. Catalyzes the reversible NADPH linked reduction of 3-dehydroshikimate (DHSA) to yield shikimate (SA). This chain is Shikimate dehydrogenase (NADP(+)), found in Methylocella silvestris (strain DSM 15510 / CIP 108128 / LMG 27833 / NCIMB 13906 / BL2).